We begin with the raw amino-acid sequence, 186 residues long: Ribosome maturation factor RimP (186 aa).

This sequence belongs to the RimP family.

The protein resides in the cytoplasm. Required for maturation of 30S ribosomal subunits. The sequence is that of Ribosome maturation factor RimP from Rhizorhabdus wittichii (strain DSM 6014 / CCUG 31198 / JCM 15750 / NBRC 105917 / EY 4224 / RW1) (Sphingomonas wittichii).